Here is a 348-residue protein sequence, read N- to C-terminus: Serpentine receptor class alpha-29 (348 aa).

A run of 6 helical transmembrane segments spans residues Phe-28–Trp-48, Phe-108–Phe-130, Gly-145–Phe-165, Ile-193–Ile-213, Cys-246–Phe-266, and Leu-280–Ile-300.

Belongs to the nematode receptor-like protein sra family.

It is found in the membrane. The chain is Serpentine receptor class alpha-29 (sra-29) from Caenorhabditis elegans.